Reading from the N-terminus, the 144-residue chain is Large ribosomal subunit protein uL15 (144 aa).

Positions 1–56 (MELNNLKPAAGAKHAKRRVGRGIGSGLGKTAGRGHKGQKSRSGGFHKVGFEGGQMP) are disordered. Residues 21–31 (RGIGSGLGKTA) show a composition bias toward gly residues.

It belongs to the universal ribosomal protein uL15 family. Part of the 50S ribosomal subunit.

Its function is as follows. Binds to the 23S rRNA. This chain is Large ribosomal subunit protein uL15, found in Burkholderia multivorans (strain ATCC 17616 / 249).